The chain runs to 279 residues: MKVISSIQELRDQLRGQNRTAFVPTMGNLHEGHLSLMRLARQHGDPVVASIFVNRLQFGPNEDFDKYPRTLQDDIEKLQKENVYVLFAPTERDMYPEPQEYRVLPPDDLGGILEGEFRPGFFAGVCTVVTKLMSCVQPRVAVFGKKDYQQLMIVRRMCQQLALPVDIIAAETVRDEDGLALSSRNRYLTTDERKEAPELAKTLQRVRDGVLGGERDLGKLEQTARTHLAERGWAPDYISIRRRANLIAPSAAELEAGEPLVVLAAAKLGATRLIDNLEI.

Residue 26-33 (MGNLHEGH) coordinates ATP. H33 acts as the Proton donor in catalysis. Q57 lines the (R)-pantoate pocket. Residue Q57 participates in beta-alanine binding. 144–147 (GKKD) is a binding site for ATP. Position 150 (Q150) interacts with (R)-pantoate. ATP contacts are provided by residues V173 and 181–184 (LSSR).

It belongs to the pantothenate synthetase family. As to quaternary structure, homodimer.

Its subcellular location is the cytoplasm. It catalyses the reaction (R)-pantoate + beta-alanine + ATP = (R)-pantothenate + AMP + diphosphate + H(+). The protein operates within cofactor biosynthesis; (R)-pantothenate biosynthesis; (R)-pantothenate from (R)-pantoate and beta-alanine: step 1/1. Its function is as follows. Catalyzes the condensation of pantoate with beta-alanine in an ATP-dependent reaction via a pantoyl-adenylate intermediate. The protein is Pantothenate synthetase of Burkholderia ambifaria (strain MC40-6).